A 149-amino-acid polypeptide reads, in one-letter code: Calmodulin, striated muscle (149 aa).

4 consecutive EF-hand domains span residues glutamate 8 to asparagine 43, proline 44 to aspartate 79, aspartate 81 to lysine 116, and leucine 117 to lysine 149. The Ca(2+) site is built by aspartate 21, aspartate 23, aspartate 25, cysteine 27, glutamate 32, aspartate 57, aspartate 59, serine 61, threonine 63, glutamate 68, aspartate 94, aspartate 96, asparagine 98, tyrosine 100, and glutamate 105. Lysine 116 is subject to N6,N6,N6-trimethyllysine. Ca(2+) contacts are provided by aspartate 130, asparagine 132, aspartate 134, glutamine 136, and glutamate 141.

It belongs to the calmodulin family.

This chain is Calmodulin, striated muscle (CCM1), found in Gallus gallus (Chicken).